Here is a 35-residue protein sequence, read N- to C-terminus: UPF0387 membrane protein YohO (35 aa).

Residues I6–A26 traverse the membrane as a helical segment.

The protein belongs to the UPF0387 family.

It is found in the cell inner membrane. This is UPF0387 membrane protein YohO from Shigella boydii serotype 4 (strain Sb227).